A 335-amino-acid polypeptide reads, in one-letter code: MQAAQLSWELENAVTLIDPQRDSLYRYDEETHKYLSDTRPWTKDPHYFKSVRISAVALLKMVMHARSGGSLEVMGLMQGYILPNTFVVTDAFRLPVEGTETRVNAQDEANEYMVSYLQSCREAGRMENAVGWYHSHPGYGCWLSGIDVSTQDMQQMSGPFVAVVIDPERTISAGKVDIGAFRTFPKDYTPPKEEQEEDEYQTVPLNKAEDFGAHASHYYSLEVSLFKSALDTEILSLLWNKYWVATLSQSPLFTTRDYGSKQMLDLSQKTRRVARGIESNPPRGGAPTQVRDQQLERVVKDGQRIVSEEVKGLLAAEVKMQLFQGIGGKQTVEST.

The MPN domain maps to 51–187 (VRISAVALLK…IGAFRTFPKD (137 aa)). The Zn(2+) site is built by H134, H136, and D147. Residues 134–147 (HSHPGYGCWLSGID) carry the JAMM motif motif.

This sequence belongs to the peptidase M67A family. CSN5 subfamily. As to quaternary structure, component of the COP9 signalosome (CSN) complex.

It localises to the cytoplasm. Its subcellular location is the nucleus. Functionally, catalytic component of the COP9 signalosome (CSN) complex that acts as an regulator of the ubiquitin (Ubl) conjugation pathway by mediating the deneddylation of the cullin subunit of SCF-type E3 ubiquitin-protein ligase complexes. The CSN complex seems to link protein degradation to sexual development. Required for fruit body formation. In Emericella nidulans (strain FGSC A4 / ATCC 38163 / CBS 112.46 / NRRL 194 / M139) (Aspergillus nidulans), this protein is COP9 signalosome complex subunit 5 (rri1).